The sequence spans 529 residues: GTPase Obg (529 aa).

An Obg domain is found at 2 to 159; sequence ASFVDRVVLH…SDIVLELKSI (158 aa). The OBG-type G domain maps to 160-343; sequence ADIALVGFPS…LGFAMAEIVK (184 aa). GTP contacts are provided by residues 166-173, 191-195, 212-215, 295-298, and 324-326; these read GFPSAGKS, FTTLI, DVPG, NKVD, and SAT. Residues Ser173 and Thr193 each contribute to the Mg(2+) site. An OCT domain is found at 363–447; the sequence is PRAVNETGFR…DDGVVFDWEP (85 aa). Positions 461–529 are disordered; that stretch reads GTDIRFADTG…ESGLDSGDES (69 aa). The segment covering 462-502 has biased composition (basic and acidic residues); that stretch reads TDIRFADTGDRPTRSQKREEQQERRDAKAAARAELEAERKA.

This sequence belongs to the TRAFAC class OBG-HflX-like GTPase superfamily. OBG GTPase family. In terms of assembly, monomer. It depends on Mg(2+) as a cofactor.

It localises to the cytoplasm. An essential GTPase which binds GTP, GDP and possibly (p)ppGpp with moderate affinity, with high nucleotide exchange rates and a fairly low GTP hydrolysis rate. Plays a role in control of the cell cycle, stress response, ribosome biogenesis and in those bacteria that undergo differentiation, in morphogenesis control. This chain is GTPase Obg, found in Pseudarthrobacter chlorophenolicus (strain ATCC 700700 / DSM 12829 / CIP 107037 / JCM 12360 / KCTC 9906 / NCIMB 13794 / A6) (Arthrobacter chlorophenolicus).